Reading from the N-terminus, the 201-residue chain is Regulator of G-protein signaling 16 (201 aa).

S-palmitoyl cysteine attachment occurs at residues cysteine 2 and cysteine 12. An RGS domain is found at 64 to 180 (SFDLLLNSKN…LKSPAYRDLA (117 aa)). Position 167 is a phosphotyrosine; by EGFR (tyrosine 167). Tyrosine 176 carries the phosphotyrosine modification. The segment at 181–201 (AQASATSTSAPSGSPAEPSHT) is disordered.

In terms of assembly, interacts with GNAI1 and GNAQ. Interacts with GNAI3, GNAI3 and GNAO1. In terms of processing, palmitoylated on Cys-2 and/or Cys-12. Phosphorylated. Phosphorylation at Tyr-167 by EGFR enhances GTPase accelerating (GAP) activity toward GNAI1. Retinal; also predominantly expressed in the liver and pituitary.

Its subcellular location is the membrane. Functionally, regulates G protein-coupled receptor signaling cascades. Inhibits signal transduction by increasing the GTPase activity of G protein alpha subunits, thereby driving them into their inactive GDP-bound form. Plays an important role in the phototransduction cascade by regulating the lifetime and effective concentration of activated transducin alpha. May regulate extra and intracellular mitogenic signals. The protein is Regulator of G-protein signaling 16 (Rgs16) of Mus musculus (Mouse).